The following is an 823-amino-acid chain: MGEEFKPAIQEKRWDIGEEEKLLSLWDAEDLHKSTLDPDDPREIVVIDTPPPYPSGKWHVGGAAHYTQIDMIARYFRLKGYNVVAPFYADRNGLPVEVQVEKTYGVVAHEMARTTEGRERFLALCSEFLDKVESEIVQLWRRLGCGFDYWREGTDSPRYRSMTQATFIDLWRRGLIYEAERPVRWCPRCKTTLAEAEIEHKEDEDFIYYVKYRLEEDGRDLVVATTRPELLAGCAALAYHPEDERYKGLAGKTAIAPLYGHRVKIVEHPAVKKDFGTGLMMICSYGDEEDVRLFLELDLKPKVLIDENGVMNENAGPIAGLPVKEARRRIAEILEREGLLVKKERIVHSVPVCWRCKTPLQIIHRRELFLRQLDFKDAVKQAAAKMDFKPEMHRKKLYDWIDSIKMDWPISRERFYGTEIPLWTCEKCGAKLVPEPGRYYRPWAEEPPWDSCPRCGAPRRYLKGETRVFDTWFDSSISPLYVTRWMWDKRFYERASRNVLRPQGQDIIRTWLYYSILRVLQLTGKPAFRWVRITGLGLDPKGRPMHKSLGNVIDPEPIIAKYGGDAFRFWAAIAAKLGYDYRFDENKVKTGRNFATKLWNLARFVSSFPRPEGSPLEKATEVDKAFLALADEYLEAADKAYGELDVYEPANLIYELAWDIFASHYVELVKERSYNRSGLFTREEQEAAWATLHELLRRILVALSPIMPFVTDAIHRRLYGSSVHRQRWPDPLFTPEERRELAGKARLIVSVNKAVWNLKRSMGKKLYEPLDTVEVLVPSGIESARRDLEALHKAAIRTYTGAPPEGSEEAIPGSSVYYIAKKS.

Residue Lys-547 participates in ATP binding.

It belongs to the class-I aminoacyl-tRNA synthetase family. ValS type 2 subfamily.

The protein resides in the cytoplasm. The enzyme catalyses tRNA(Val) + L-valine + ATP = L-valyl-tRNA(Val) + AMP + diphosphate. Functionally, catalyzes the attachment of valine to tRNA(Val). As ValRS can inadvertently accommodate and process structurally similar amino acids such as threonine, to avoid such errors, it has a 'posttransfer' editing activity that hydrolyzes mischarged Thr-tRNA(Val) in a tRNA-dependent manner. The sequence is that of Valine--tRNA ligase (valS) from Aeropyrum pernix (strain ATCC 700893 / DSM 11879 / JCM 9820 / NBRC 100138 / K1).